The primary structure comprises 304 residues: Acetyl-coenzyme A carboxylase carboxyl transferase subunit beta (304 aa).

The 270-residue stretch at 26 to 295 folds into the CoA carboxyltransferase N-terminal domain; it reads VWTKCTSCEQ…PFVEPELVEN (270 aa). Positions 30, 33, 49, and 52 each coordinate Zn(2+). Residues 30–52 form a C4-type zinc finger; sequence CTSCEQVLYRDELRRHLEVCPKC. The disordered stretch occupies residues 281–304; sequence SNKPSPFVEPELVENEEQSKSDNE.

Belongs to the AccD/PCCB family. Acetyl-CoA carboxylase is a heterohexamer composed of biotin carboxyl carrier protein (AccB), biotin carboxylase (AccC) and two subunits each of ACCase subunit alpha (AccA) and ACCase subunit beta (AccD). Zn(2+) serves as cofactor.

It localises to the cytoplasm. It carries out the reaction N(6)-carboxybiotinyl-L-lysyl-[protein] + acetyl-CoA = N(6)-biotinyl-L-lysyl-[protein] + malonyl-CoA. The protein operates within lipid metabolism; malonyl-CoA biosynthesis; malonyl-CoA from acetyl-CoA: step 1/1. Component of the acetyl coenzyme A carboxylase (ACC) complex. Biotin carboxylase (BC) catalyzes the carboxylation of biotin on its carrier protein (BCCP) and then the CO(2) group is transferred by the transcarboxylase to acetyl-CoA to form malonyl-CoA. This chain is Acetyl-coenzyme A carboxylase carboxyl transferase subunit beta, found in Pasteurella multocida (strain Pm70).